The primary structure comprises 435 residues: Tubulin-like protein TubZ (435 aa).

GTP is bound by residues 25–26 (MG), 124–126 (GTG), N185, and N209. Residues 403–435 (QEEKPKKKKLNFGAEPEAEVADDSQPTKKKLSF) form a disordered region.

It belongs to the FtsZ family. TubZ subfamily. As to quaternary structure, polymerizes to form two-stranded filaments and bundles at higher concentration in the presence of GTP. Binds to the TubR-tubC protein DNA complex.

The protein resides in the cytoplasm. The catalysed reaction is GTP + H2O = GDP + phosphate + H(+). Its activity is regulated as follows. GTPase inhibited by GTP-gamma-S, which also stabilizes filaments. Functionally, a tubulin-like, filament forming GTPase; the motor component of the type III plasmid partition system which ensures correct segregation of the pXO1 plasmid. Essential for plasmid replication. The filaments seed from a DNA centromere-like site (tubC)-TubR complex which extends to surround the TubZ filaments. Highly dynamic filaments grow at the plus end and depolymerize at the minus end, a process called treadmilling. TubR-tubC complexes track the depolymerizing minus end of the filament, probably pulling plasmid within the cell. Has a high GTPase activity; in the presence of GTP assembles into dynamic filaments which bind almost exclusively GDP. Filament formation is cooperative, requiring a critical concentration. Formation occurs very quickly and is followed by disassembly as GTP is consumed. Small amounts of GTP-gamma-S stabilize filaments. Has high GTP and dGTPase activity, 6-fold lower ATPase activity. Forms filaments in the presence of ATP that also disassemble. Weakly binds DNA in a GTP-dependent, non-sequence-specific manner; GTP hydrolysis is not required for DNA-binding. The polypeptide is Tubulin-like protein TubZ (Bacillus anthracis).